The sequence spans 286 residues: Bifunctional protein FolD (286 aa).

Residues 166–168 (GAS) and I232 contribute to the NADP(+) site.

The protein belongs to the tetrahydrofolate dehydrogenase/cyclohydrolase family. In terms of assembly, homodimer.

It carries out the reaction (6R)-5,10-methylene-5,6,7,8-tetrahydrofolate + NADP(+) = (6R)-5,10-methenyltetrahydrofolate + NADPH. It catalyses the reaction (6R)-5,10-methenyltetrahydrofolate + H2O = (6R)-10-formyltetrahydrofolate + H(+). The protein operates within one-carbon metabolism; tetrahydrofolate interconversion. In terms of biological role, catalyzes the oxidation of 5,10-methylenetetrahydrofolate to 5,10-methenyltetrahydrofolate and then the hydrolysis of 5,10-methenyltetrahydrofolate to 10-formyltetrahydrofolate. This is Bifunctional protein FolD from Vibrio campbellii (strain ATCC BAA-1116).